A 178-amino-acid polypeptide reads, in one-letter code: Protamine-like protein (178 aa).

2 disordered regions span residues 1 to 27 and 77 to 178; these read PSTT…TVSD and SVVK…RAKK. 2 stretches are compositionally biased toward basic residues: residues 8–21 and 94–178; these read SPKR…RKRT and PRRR…RAKK. The 69-residue stretch at 21–89 folds into the H15 domain; sequence TGPTVSDLIL…KAKGFYKLNK (69 aa).

Male germ cells.

The protein localises to the nucleus. The protein resides in the chromosome. Functionally, replaces histones in the chromatin of sperm during the haploid phase of spermatogenesis. Compacts sperm DNA into a highly condensed, stable and inactive complex. The chain is Protamine-like protein from Mullus surmuletus (Striped red mullet).